The sequence spans 76 residues: MLRLPVSQSNTPTTPIIVKCPTCKKEVEWGEQSPYRPFCTKRCQLIDLGEWAEEEKSIPGAPDLSDSDGWSDDMGY.

Zn(2+)-binding residues include Cys-20, Cys-23, Cys-39, and Cys-43. Residues 54 to 76 (EEKSIPGAPDLSDSDGWSDDMGY) form a disordered region. The span at 65–76 (SDSDGWSDDMGY) shows a compositional bias: acidic residues.

It belongs to the DNA gyrase inhibitor YacG family. As to quaternary structure, interacts with GyrB. Zn(2+) serves as cofactor.

Inhibits all the catalytic activities of DNA gyrase by preventing its interaction with DNA. Acts by binding directly to the C-terminal domain of GyrB, which probably disrupts DNA binding by the gyrase. The polypeptide is DNA gyrase inhibitor YacG (Photobacterium profundum (strain SS9)).